Reading from the N-terminus, the 511-residue chain is Maturase K (511 aa).

It belongs to the intron maturase 2 family. MatK subfamily.

The protein resides in the plastid. It localises to the chloroplast. Its function is as follows. Usually encoded in the trnK tRNA gene intron. Probably assists in splicing its own and other chloroplast group II introns. The chain is Maturase K from Anchomanes difformis (Amorphophallus difformis).